Consider the following 518-residue polypeptide: Ribonuclease Y (518 aa).

A helical membrane pass occupies residues 2–22 (GSIIISALLALVIGAVVGFFV). In terms of domain architecture, KH spans 208–271 (TVSVVNLPND…ETARIALDKL (64 aa)). An HD domain is found at 334–427 (VLKHSVEVAF…VAAADALSAA (94 aa)).

Belongs to the RNase Y family.

The protein resides in the cell membrane. In terms of biological role, endoribonuclease that initiates mRNA decay. In Geobacillus kaustophilus (strain HTA426), this protein is Ribonuclease Y.